The following is a 292-amino-acid chain: Elongation factor Ts (292 aa).

The segment at 80–83 is involved in Mg(2+) ion dislocation from EF-Tu; that stretch reads TDFV.

This sequence belongs to the EF-Ts family.

The protein resides in the cytoplasm. In terms of biological role, associates with the EF-Tu.GDP complex and induces the exchange of GDP to GTP. It remains bound to the aminoacyl-tRNA.EF-Tu.GTP complex up to the GTP hydrolysis stage on the ribosome. This chain is Elongation factor Ts, found in Oenococcus oeni (strain ATCC BAA-331 / PSU-1).